Consider the following 57-residue polypeptide: Large ribosomal subunit protein bL32 (57 aa).

It belongs to the bacterial ribosomal protein bL32 family.

The sequence is that of Large ribosomal subunit protein bL32 (rpmF) from Halalkalibacterium halodurans (strain ATCC BAA-125 / DSM 18197 / FERM 7344 / JCM 9153 / C-125) (Bacillus halodurans).